Here is a 913-residue protein sequence, read N- to C-terminus: Calcium-activated chloride channel regulator 1 (913 aa).

A signal peptide spans 1–21 (MESLKSPVFLLILHLLEGVLS). The metalloprotease domain stretch occupies residues 46–199 (DEALIQHIKD…AITGKNQVRR (154 aa)). His156 is a Zn(2+) binding site. Residue Glu157 is part of the active site. His160 and Asn167 together coordinate Zn(2+). In terms of domain architecture, VWFA spans 307-476 (IVCLVLDKSG…NGLVDAFAAL (170 aa)). 6 N-linked (GlcNAc...) asparagine glycosylation sites follow: Asn504, Asn770, Asn804, Asn810, Asn836, and Asn887.

This sequence belongs to the CLCR family. In terms of processing, the 110 kDa translation product is autoproteolytically cleaved by the metalloprotease domain in the endoplasmic reticulum into a 75 kDa N-terminal and a 35 kDa C-terminal products that remain physically associated with each other. The cleavage is necessary for calcium-activated chloride channel (CaCC) activation activity. Glycosylated. In terms of tissue distribution, exclusively expressed in the digestive and respiratory tracts and in the uterus (at protein level). Expressed in small intestine, colon, stomach, and uterus and slightly expressed in trachea tissue. Exclusively expressed in the mucin granule membranes of gastrointestinal, respiratory, and uterine goblet cells and other mucin-producing cells. In the colon, expressed in the surface mucous cells. In the stomach highly expressed in the surface epithelium in the pylorus. Strongly expressed in the airway epithelium of lung tissues associated with airway hyperresponsiveness (AHR).

The protein resides in the secreted. Its subcellular location is the extracellular space. Its function is as follows. May be involved in mediating calcium-activated chloride conductance. May play critical roles in goblet cell metaplasia, mucus hypersecretion, cystic fibrosis and AHR. May be involved in the regulation of mucus production and/or secretion by goblet cells. Involved in the regulation of tissue inflammation in the innate immune response. May play a role as a tumor suppressor. Induces MUC5AC. The protein is Calcium-activated chloride channel regulator 1 (Clca1) of Mus musculus (Mouse).